The primary structure comprises 227 residues: Cytochrome c oxidase subunit 2 (227 aa).

Met-1 is modified (N-formylmethionine). The Mitochondrial intermembrane segment spans residues 1 to 14 (MAYPMQLGFQDATS). The helical transmembrane segment at 15 to 45 (PIMEELLHFHDHTLMIVFLISSLVLYIISLM) threads the bilayer. Residues 46–59 (LTTKLTHTSTMDAQ) are Mitochondrial matrix-facing. Residues 60 to 87 (EVETIWTILPAIILILIALPSLRILYMM) traverse the membrane as a helical segment. Residues 88–227 (DEINNPSLTV…YFEKWSASML (140 aa)) are Mitochondrial intermembrane-facing. Residues His-161, Cys-196, Glu-198, Cys-200, His-204, and Met-207 each coordinate Cu cation. Mg(2+) is bound at residue Glu-198. Phosphotyrosine is present on Tyr-218.

This sequence belongs to the cytochrome c oxidase subunit 2 family. As to quaternary structure, component of the cytochrome c oxidase (complex IV, CIV), a multisubunit enzyme composed of 14 subunits. The complex is composed of a catalytic core of 3 subunits MT-CO1, MT-CO2 and MT-CO3, encoded in the mitochondrial DNA, and 11 supernumerary subunits COX4I, COX5A, COX5B, COX6A, COX6B, COX6C, COX7A, COX7B, COX7C, COX8 and NDUFA4, which are encoded in the nuclear genome. The complex exists as a monomer or a dimer and forms supercomplexes (SCs) in the inner mitochondrial membrane with NADH-ubiquinone oxidoreductase (complex I, CI) and ubiquinol-cytochrome c oxidoreductase (cytochrome b-c1 complex, complex III, CIII), resulting in different assemblies (supercomplex SCI(1)III(2)IV(1) and megacomplex MCI(2)III(2)IV(2)). Found in a complex with TMEM177, COA6, COX18, COX20, SCO1 and SCO2. Interacts with TMEM177 in a COX20-dependent manner. Interacts with COX20. Interacts with COX16. It depends on Cu cation as a cofactor.

The protein localises to the mitochondrion inner membrane. It carries out the reaction 4 Fe(II)-[cytochrome c] + O2 + 8 H(+)(in) = 4 Fe(III)-[cytochrome c] + 2 H2O + 4 H(+)(out). Functionally, component of the cytochrome c oxidase, the last enzyme in the mitochondrial electron transport chain which drives oxidative phosphorylation. The respiratory chain contains 3 multisubunit complexes succinate dehydrogenase (complex II, CII), ubiquinol-cytochrome c oxidoreductase (cytochrome b-c1 complex, complex III, CIII) and cytochrome c oxidase (complex IV, CIV), that cooperate to transfer electrons derived from NADH and succinate to molecular oxygen, creating an electrochemical gradient over the inner membrane that drives transmembrane transport and the ATP synthase. Cytochrome c oxidase is the component of the respiratory chain that catalyzes the reduction of oxygen to water. Electrons originating from reduced cytochrome c in the intermembrane space (IMS) are transferred via the dinuclear copper A center (CU(A)) of subunit 2 and heme A of subunit 1 to the active site in subunit 1, a binuclear center (BNC) formed by heme A3 and copper B (CU(B)). The BNC reduces molecular oxygen to 2 water molecules using 4 electrons from cytochrome c in the IMS and 4 protons from the mitochondrial matrix. The sequence is that of Cytochrome c oxidase subunit 2 (MT-CO2) from Bos indicus (Zebu).